The chain runs to 453 residues: uncharacterized protein (453 aa).

This is an uncharacterized protein from Caenorhabditis elegans.